Reading from the N-terminus, the 257-residue chain is Protein YIPF5 (257 aa).

The Cytoplasmic segment spans residues 1–124 (MSGFDNFNTD…KASDGSIMNE (124 aa)). A helical transmembrane segment spans residues 125–145 (TDLAGPMVFCLAFGATLLLTG). Residue Lys-146 is a topological domain, lumenal. A helical transmembrane segment spans residues 147-167 (IQFGYVYGISAIGCLGMYCLL). The Cytoplasmic segment spans residues 168–173 (NLMSMT). A helical membrane pass occupies residues 174 to 194 (GVSFGCVASVLGYCLLPMIIL). The Lumenal segment spans residues 195–196 (SS). Residues 197–217 (FGVIFSLQGIMGIILTAAIIG) form a helical membrane-spanning segment. The Cytoplasmic segment spans residues 218 to 236 (WCSLSASKIFISALAMDGQ). Residues 237 to 257 (QLLVAYPCALLYGVFALISVF) form a helical membrane-spanning segment.

It belongs to the YIP1 family.

It localises to the endoplasmic reticulum membrane. The protein resides in the golgi apparatus. The protein localises to the cis-Golgi network membrane. Its function is as follows. Plays a role in transport between endoplasmic reticulum and Golgi. The sequence is that of Protein YIPF5 (yipf5) from Danio rerio (Zebrafish).